A 218-amino-acid polypeptide reads, in one-letter code: Pyridoxal 5'-phosphate synthase subunit PdxT (218 aa).

54–56 (GES) is an L-glutamine binding site. Cys-86 (nucleophile) is an active-site residue. L-glutamine-binding positions include Arg-120 and 149-150 (IR). Catalysis depends on charge relay system residues His-197 and Glu-199.

Belongs to the glutaminase PdxT/SNO family. In terms of assembly, in the presence of PdxS, forms a dodecamer of heterodimers. Only shows activity in the heterodimer.

It carries out the reaction aldehydo-D-ribose 5-phosphate + D-glyceraldehyde 3-phosphate + L-glutamine = pyridoxal 5'-phosphate + L-glutamate + phosphate + 3 H2O + H(+). The catalysed reaction is L-glutamine + H2O = L-glutamate + NH4(+). Its pathway is cofactor biosynthesis; pyridoxal 5'-phosphate biosynthesis. In terms of biological role, catalyzes the hydrolysis of glutamine to glutamate and ammonia as part of the biosynthesis of pyridoxal 5'-phosphate. The resulting ammonia molecule is channeled to the active site of PdxS. In Saccharopolyspora erythraea (strain ATCC 11635 / DSM 40517 / JCM 4748 / NBRC 13426 / NCIMB 8594 / NRRL 2338), this protein is Pyridoxal 5'-phosphate synthase subunit PdxT.